The sequence spans 271 residues: Putative phosphoenolpyruvate synthase regulatory protein (271 aa).

151–158 (GVSRSGKT) serves as a coordination point for ADP.

It belongs to the pyruvate, phosphate/water dikinase regulatory protein family. PSRP subfamily.

The enzyme catalyses [pyruvate, water dikinase] + ADP = [pyruvate, water dikinase]-phosphate + AMP + H(+). The catalysed reaction is [pyruvate, water dikinase]-phosphate + phosphate + H(+) = [pyruvate, water dikinase] + diphosphate. Its function is as follows. Bifunctional serine/threonine kinase and phosphorylase involved in the regulation of the phosphoenolpyruvate synthase (PEPS) by catalyzing its phosphorylation/dephosphorylation. The chain is Putative phosphoenolpyruvate synthase regulatory protein from Paraburkholderia xenovorans (strain LB400).